The chain runs to 332 residues: NADH-quinone oxidoreductase subunit H (332 aa).

The next 8 helical transmembrane spans lie at 11-31 (TYKI…IVWL), 77-97 (VIFI…WAVI), 110-130 (VGVL…IMGG), 156-176 (IGVI…NDII), 182-202 (LWFI…ALAE), 240-260 (NILL…LSPI), 268-288 (IPGA…FALV), and 307-327 (IFLP…FYFN).

It belongs to the complex I subunit 1 family. NDH-1 is composed of 14 different subunits. Subunits NuoA, H, J, K, L, M, N constitute the membrane sector of the complex.

It is found in the cell inner membrane. The catalysed reaction is a quinone + NADH + 5 H(+)(in) = a quinol + NAD(+) + 4 H(+)(out). Functionally, NDH-1 shuttles electrons from NADH, via FMN and iron-sulfur (Fe-S) centers, to quinones in the respiratory chain. The immediate electron acceptor for the enzyme in this species is believed to be ubiquinone. Couples the redox reaction to proton translocation (for every two electrons transferred, four hydrogen ions are translocated across the cytoplasmic membrane), and thus conserves the redox energy in a proton gradient. This subunit may bind ubiquinone. The protein is NADH-quinone oxidoreductase subunit H of Pelagibacter ubique (strain HTCC1062).